The sequence spans 292 residues: Potassium channel, subfamily K, member 16 (292 aa).

Over 1–13 (MPRAGVCGCWGGQ) the chain is Cytoplasmic. Residues 14–34 (VLPLLLAYICYLLLGATIFQL) traverse the membrane as a helical segment. Positions 98–116 (SFFFAGTVVTTIGYGNLAP) form an intramembrane region, pore-forming. K(+) contacts are provided by Thr-108, Ile-109, Gly-110, and Tyr-111. Positions 108 to 113 (TIGYGN) are selectivity filter 1. The helical transmembrane segment at 120–140 (AGQVFCVFYALMGIPLNVVFL) threads the bilayer. The Cytoplasmic portion of the chain corresponds to 141–165 (NHLGTGLRAHLTTLDRWEDHPRHSQ). A helical membrane pass occupies residues 166-186 (LLQVLGLALFLTLGTLVILIF). The segment at residues 202–221 (GFYFAFITLSTIGFGDYVVG) is an intramembrane region (pore-forming). K(+) contacts are provided by Thr-212, Ile-213, Gly-214, and Phe-215. The segment at 212–217 (TIGFGD) is selectivity filter 2. A helical membrane pass occupies residues 238-258 (IWILLGLAWLAVVLSLGSLLL). The Cytoplasmic portion of the chain corresponds to 259–292 (HRCSRLWQLIRGLDLKDGAAPDSEPRSQKIPISA).

It belongs to the two pore domain potassium channel (TC 1.A.1.8) family. As to quaternary structure, homodimer; disulfide-linked. Heterodimer with KCNK17 and KCNK5. As to expression, expressed in pacreatic beta-cells (at protein level). Expressed in pacreatic delta-cells (at protein level).

It is found in the cell membrane. Its subcellular location is the endoplasmic reticulum membrane. The protein resides in the mitochondrion inner membrane. The catalysed reaction is K(+)(in) = K(+)(out). It carries out the reaction Rb(+)(in) = Rb(+)(out). The enzyme catalyses Cs(+)(in) = Cs(+)(out). Its function is as follows. K(+) channel that conducts voltage-dependent outward rectifying currents upon membrane depolarization. Voltage sensing is coupled to K(+) electrochemical gradient in an 'ion flux gating' mode where outward but not inward ion flow opens the gate. Homo- and heterodimerizes to form functional channels with distinct regulatory and gating properties. In pancreatic islets, conducts K(+) countercurrents for Ca(2+) release from the endoplasmic reticulum (ER) and regulates the frequency and duration of cytosolic Ca(2+) oscillations coupled to secretion of pancreatic hormones. In pancreatic beta cells, drives ER Ca(2+) efflux, which in turn activates Ca(2+)-dependent plasma membrane K(+) slow currents and cytosolic Ca(2+) influx, overall contributing to synchronous cytosolic Ca(2+) oscillations. Limits glucose-induced cytosolic Ca(2+) oscillations coupled to second-phase INS secretion. Contributes to beta cell adaptation to acute inflammation by maintaining normal cytosolic Ca(2+) levels and INS secretion. May regulate beta cell mitochondrial Ca(2+) levels either indirectly via ER Ca(2+) efflux or directly by hyperpolarizing the mitochondrial membrane potential. Limits mitochondrial Ca(2+) oscillations and ATP production involved in glucose homeostasis upon metabolic stress. In pancreatic delta cells, limits Ca(2+)-induced Ca(2+)-release involved in somatostatin secretion and modulates islet paracrine signaling involved in glucagon secretion. Permeable to other monovalent cations such as Rb(+) and Cs(+). The protein is Potassium channel, subfamily K, member 16 of Mus musculus (Mouse).